The sequence spans 272 residues: Large ribosomal subunit protein uL3 (272 aa).

Positions 125 to 146 are disordered; sequence QHIGPKSHGGGGGSQPLRQTGS.

This sequence belongs to the universal ribosomal protein uL3 family. In terms of assembly, part of the 50S ribosomal subunit. Forms a cluster with proteins L14 and L19.

In terms of biological role, one of the primary rRNA binding proteins, it binds directly near the 3'-end of the 23S rRNA, where it nucleates assembly of the 50S subunit. In Metamycoplasma arthritidis (strain 158L3-1) (Mycoplasma arthritidis), this protein is Large ribosomal subunit protein uL3.